The primary structure comprises 749 residues: Signal transducer and activator of transcription 4 (749 aa).

One can recognise an SH2 domain in the interval Trp570–Asp665. Lys668 is modified (N6-acetyllysine). Tyr694 is modified (phosphotyrosine; by JAK). Ser722 carries the post-translational modification Phosphoserine.

It belongs to the transcription factor STAT family. As to quaternary structure, forms a homodimer or a heterodimer with a related family member. Interacts with ARL2BP. Interacts with STAT1. Interacts with JUN; this complex efficiently interacts with the AP-1-related sequence of the IFN-gamma promoter. Acetylation at Lys-668 is required for JAK2-mediated phosphorylation and activation of STAT4. Post-translationally, tyrosine phosphorylated upon IL12 and IFN-alpha activation, but not by IFN-gamma in T-lymphocytes and NK cells. Serine phosphorylation is required for maximal transcriptional activity but not for DNA binding. Phosphorylation by MAP2K6 at Ser-722 is required for full transcriptional activity induced by IL12. However this serine phosphorylation is not required for cell proliferation although critical for IFN-gamma production. Expression is restricted to testis, thymus, and spleen.

The protein localises to the cytoplasm. It localises to the nucleus. In terms of biological role, transcriptional regulator mainly expressed in hematopoietic cells that plays a critical role in cellular growth, differentiation and immune response. Plays a key role in the differentiation of T-helper 1 cells and the production of interferon-gamma. Also participates in multiple neutrophil functions including chemotaxis and production of the neutrophil extracellular traps. After IL12 binding to its receptor IL12RB2, STAT4 interacts with the intracellular domain of IL12RB2 and becomes tyrosine phosphorylated. Phosphorylated STAT4 then homodimerizes and migrates to the nucleus where it can recognize STAT target sequences present in IL12 responsive genes. Although IL12 appears to be the predominant activating signal, STAT4 can also be phosphorylated and activated in response to IFN-gamma stimulation via JAK1 and TYK2 and in response to different interleukins including IL23, IL2 and IL35. Transcription activation of IFN-gamma gene is mediated by interaction with JUN that forms a complex that efficiently interacts with the AP-1-related sequence of the IFN-gamma promoter. In response to IFN-alpha/beta signaling, acts as a transcriptional repressor and suppresses IL5 and IL13 mRNA expression during response to T-cell receptor (TCR) activation. The sequence is that of Signal transducer and activator of transcription 4 (Stat4) from Mus musculus (Mouse).